Reading from the N-terminus, the 520-residue chain is UDP-N-acetylmuramoyl-L-alanyl-D-glutamate--2,6-diaminopimelate ligase (520 aa).

Residue L48 coordinates UDP-N-acetyl-alpha-D-muramoyl-L-alanyl-D-glutamate. 134-140 is an ATP binding site; that stretch reads GTSGKTT. Residues 176–177, S203, and R211 each bind UDP-N-acetyl-alpha-D-muramoyl-L-alanyl-D-glutamate; that span reads TT. K243 bears the N6-carboxylysine mark. Meso-2,6-diaminopimelate is bound by residues R405, 429–432, G483, and E487; that span reads DNPR. A Meso-diaminopimelate recognition motif motif is present at residues 429 to 432; sequence DNPR.

The protein belongs to the MurCDEF family. MurE subfamily. Mg(2+) serves as cofactor. Carboxylation is probably crucial for Mg(2+) binding and, consequently, for the gamma-phosphate positioning of ATP.

It is found in the cytoplasm. It catalyses the reaction UDP-N-acetyl-alpha-D-muramoyl-L-alanyl-D-glutamate + meso-2,6-diaminopimelate + ATP = UDP-N-acetyl-alpha-D-muramoyl-L-alanyl-gamma-D-glutamyl-meso-2,6-diaminopimelate + ADP + phosphate + H(+). It functions in the pathway cell wall biogenesis; peptidoglycan biosynthesis. In terms of biological role, catalyzes the addition of meso-diaminopimelic acid to the nucleotide precursor UDP-N-acetylmuramoyl-L-alanyl-D-glutamate (UMAG) in the biosynthesis of bacterial cell-wall peptidoglycan. The sequence is that of UDP-N-acetylmuramoyl-L-alanyl-D-glutamate--2,6-diaminopimelate ligase from Mycolicibacterium paratuberculosis (strain ATCC BAA-968 / K-10) (Mycobacterium paratuberculosis).